An 820-amino-acid polypeptide reads, in one-letter code: G-type lectin S-receptor-like serine/threonine-protein kinase At1g11300 (820 aa).

The N-terminal stretch at 1–26 (MRLHESSSPFVCILVLSCFFLSVSLA) is a signal peptide. In terms of domain architecture, Bulb-type lectin spans 27-150 (QERAFFSGKL…SSDAYLWESF (124 aa)). Over 27-436 (QERAFFSGKL…SEIKTKDKRP (410 aa)) the chain is Extracellular. Residues asparagine 37, asparagine 58, asparagine 87, asparagine 115, asparagine 123, asparagine 173, asparagine 211, asparagine 247, asparagine 256, and asparagine 282 are each glycosylated (N-linked (GlcNAc...) asparagine). The EGF-like; atypical domain maps to 290–326 (PATECDNYRRCGEFATCNPRKNPLCSCIRGFRPRNLI). Cystine bridges form between cysteine 294/cysteine 306 and cysteine 300/cysteine 314. 2 N-linked (GlcNAc...) asparagine glycosylation sites follow: asparagine 332 and asparagine 351. The PAN domain occupies 345–425 (CERQNNNGSA…SGLDLYIRLA (81 aa)). Disulfide bonds link cysteine 379–cysteine 400 and cysteine 383–cysteine 389. Residue asparagine 404 is glycosylated (N-linked (GlcNAc...) asparagine). The chain crosses the membrane as a helical span at residues 437-457 (ILIGTILAGGIFVVAACVLLA). Over 458-820 (RRIVMKKRAK…NVTITDVTGR (363 aa)) the chain is Cytoplasmic. In terms of domain architecture, Protein kinase spans 509–788 (FSLRNKLGQG…DIPEPKQPAF (280 aa)). ATP contacts are provided by residues 515–523 (LGQGGFGPV) and lysine 537. The tract at residues 598-615 (RRAKLLDWKTRFNIINGI) is caM-binding. Aspartate 634 (proton acceptor) is an active-site residue.

This sequence belongs to the protein kinase superfamily. Ser/Thr protein kinase family.

Its subcellular location is the cell membrane. It carries out the reaction L-seryl-[protein] + ATP = O-phospho-L-seryl-[protein] + ADP + H(+). The catalysed reaction is L-threonyl-[protein] + ATP = O-phospho-L-threonyl-[protein] + ADP + H(+). The protein is G-type lectin S-receptor-like serine/threonine-protein kinase At1g11300 of Arabidopsis thaliana (Mouse-ear cress).